Here is a 216-residue protein sequence, read N- to C-terminus: Protein Syd (216 aa).

Belongs to the Syd family.

It localises to the cell inner membrane. Functionally, interacts with the SecY protein in vivo. May bind preferentially to an uncomplexed state of SecY, thus functioning either as a chelating agent for excess SecY in the cell or as a regulatory factor that negatively controls the translocase function. The protein is Protein Syd of Shewanella putrefaciens (strain CN-32 / ATCC BAA-453).